The following is a 663-amino-acid chain: Alcohol oxidase 1 (663 aa).

8–38 contacts FAD; it reads DILVLGGGSSGSCIAGRLANLDHSLKVGLIE. His-567 functions as the Proton acceptor in the catalytic mechanism. A Microbody targeting signal motif is present at residues 661-663; sequence ARF.

It belongs to the GMC oxidoreductase family. In terms of assembly, homooctamer. FAD serves as cofactor.

It localises to the peroxisome matrix. The catalysed reaction is a primary alcohol + O2 = an aldehyde + H2O2. It participates in energy metabolism; methane degradation. Major isoform of alcohol oxidase, which catalyzes the oxidation of methanol to formaldehyde and hydrogen peroxide, the first step in the methanol utilization pathway of methylotrophic yeasts. This is Alcohol oxidase 1 (AOX1) from Komagataella phaffii (strain ATCC 76273 / CBS 7435 / CECT 11047 / NRRL Y-11430 / Wegner 21-1) (Yeast).